The sequence spans 241 residues: Large ribosomal subunit protein uL3 (241 aa).

Disordered regions lie at residues 139–164 (VSHR…KMPG) and 215–241 (DAPK…QEGV). At Gln151 the chain carries N5-methylglutamine. Low complexity predominate over residues 225 to 241 (ANGGEEAAAPAAEQEGV).

Belongs to the universal ribosomal protein uL3 family. As to quaternary structure, part of the 50S ribosomal subunit. Forms a cluster with proteins L14 and L19. Methylated by PrmB.

Its function is as follows. One of the primary rRNA binding proteins, it binds directly near the 3'-end of the 23S rRNA, where it nucleates assembly of the 50S subunit. The polypeptide is Large ribosomal subunit protein uL3 (Rhodopseudomonas palustris (strain HaA2)).